We begin with the raw amino-acid sequence, 94 residues long: Protein S100-A1 (94 aa).

2 consecutive EF-hand domains span residues 13–48 (INVF…FLDV) and 50–85 (KDAD…LTVA). 7 residues coordinate Ca(2+): Lys-28, Glu-33, Asp-63, Asn-65, Asp-67, Glu-69, and Glu-74. Residue Cys-86 is modified to S-nitrosocysteine.

It belongs to the S-100 family. Dimer of either two alpha chains, or two beta chains, or one alpha and one beta chain. Also forms heterodimers with S100P. Interacts with AGER. Interacts with CAPZA1. Interacts with FKBP4. Interacts with RYR1 and RYR2. Interacts with CACYBP in a calcium-dependent manner. Interacts with PPP5C (via TPR repeats); the interaction is calcium-dependent and modulates PPP5C activity. Interacts with ATP2A2 and PLN in a Ca(2+)-dependent manner. Interacts with mitochondrial F1-ATPase subunits ATP5F1A and ATP5F1B; these interactions increase F1-ATPase activity. Glutathionylated; glutathionylation increases affinity to calcium about 10-fold. As to expression, although predominant among the water-soluble brain proteins, S100 is also found in a variety of other tissues.

The protein resides in the cytoplasm. It is found in the sarcoplasmic reticulum. It localises to the mitochondrion. Functionally, small calcium binding protein that plays important roles in several biological processes such as Ca(2+) homeostasis, chondrocyte biology and cardiomyocyte regulation. In response to an increase in intracellular Ca(2+) levels, binds calcium which triggers conformational changes. These changes allow interactions with specific target proteins and modulate their activity. Regulates a network in cardiomyocytes controlling sarcoplasmic reticulum Ca(2+) cycling and mitochondrial function through interaction with the ryanodine receptors RYR1 and RYR2, sarcoplasmic reticulum Ca(2+)-ATPase/ATP2A2 and mitochondrial F1-ATPase. Facilitates diastolic Ca(2+) dissociation and myofilament mechanics in order to improve relaxation during diastole. The sequence is that of Protein S100-A1 (S100a1) from Rattus norvegicus (Rat).